A 180-amino-acid polypeptide reads, in one-letter code: GTP cyclohydrolase 1 (180 aa).

Zn(2+)-binding residues include cysteine 71, histidine 74, and cysteine 142.

It belongs to the GTP cyclohydrolase I family. Homomer.

The catalysed reaction is GTP + H2O = 7,8-dihydroneopterin 3'-triphosphate + formate + H(+). Its pathway is cofactor biosynthesis; 7,8-dihydroneopterin triphosphate biosynthesis; 7,8-dihydroneopterin triphosphate from GTP: step 1/1. The polypeptide is GTP cyclohydrolase 1 (Helicobacter pylori (strain Shi470)).